The following is a 418-amino-acid chain: cAMP-dependent protein kinase type II-beta regulatory subunit (418 aa).

The dimerization and phosphorylation stretch occupies residues 2–153 (SIEIPAGLTE…RLQEACKDIL (152 aa)). Residues 48 to 57 (TARFGHEGRT) show a composition bias toward basic and acidic residues. Residues 48 to 96 (TARFGHEGRTWGDLGAAAGGGTPSKGVNFAEEPMQSDSEDGEEEEAAPA) form a disordered region. The residue at position 69 (threonine 69) is a Phosphothreonine. 3 positions are modified to phosphoserine: serine 83, serine 85, and serine 114. Over residues 84-94 (DSEDGEEEEAA) the composition is skewed to acidic residues. 3',5'-cyclic AMP is bound by residues 154–275 (LFKN…ESLP), glutamate 223, arginine 232, 276–418 (FLKS…EPTA), glutamate 352, and arginine 361.

Belongs to the cAMP-dependent kinase regulatory chain family. As to quaternary structure, the inactive form of the enzyme is composed of two regulatory chains and two catalytic chains. Activation by cAMP produces two active catalytic monomers and a regulatory dimer that binds four cAMP molecules. Interacts with PRKACA and PRKACB. Interacts with the phosphorylated form of PJA2. Forms a complex composed of PRKAR2B, GSK3B and GSKIP through GSKIP interaction; facilitates PKA-induced phosphorylation and regulates GSK3B activity. Post-translationally, phosphorylated by the activated catalytic chain. As to expression, four types of regulatory chains are found: I-alpha, I-beta, II-alpha, and II-beta. Their expression varies among tissues and is in some cases constitutive and in others inducible.

It localises to the cytoplasm. The protein resides in the cell membrane. Its function is as follows. Regulatory subunit of the cAMP-dependent protein kinases involved in cAMP signaling in cells. Type II regulatory chains mediate membrane association by binding to anchoring proteins, including the MAP2 kinase. The polypeptide is cAMP-dependent protein kinase type II-beta regulatory subunit (PRKAR2B) (Homo sapiens (Human)).